Here is a 130-residue protein sequence, read N- to C-terminus: Small ribosomal subunit protein uS9 (130 aa).

Belongs to the universal ribosomal protein uS9 family.

This chain is Small ribosomal subunit protein uS9, found in Shigella sonnei (strain Ss046).